Here is a 133-residue protein sequence, read N- to C-terminus: MAAPFALRKIGVPPNSANLTEARRRVFDFFRAACRSIPTIMDIYNLQDVVAPSQLRYAISAQIRNNAHITDPKVIDLLIFKGMEELTDIVDHAKQRHHIIGQYVVGEGLVQNTGNKDQGKTDFLKNFYTSNYF.

Belongs to the complex I LYR family. Complex I is composed of at least 49 different subunits.

The protein resides in the mitochondrion inner membrane. In terms of biological role, accessory subunit of the mitochondrial membrane respiratory chain NADH dehydrogenase (Complex I), that is believed to be not involved in catalysis. Complex I functions in the transfer of electrons from NADH to the respiratory chain. The immediate electron acceptor for the enzyme is believed to be ubiquinone. The sequence is that of NADH dehydrogenase [ubiquinone] 1 alpha subcomplex subunit 6 from Arabidopsis thaliana (Mouse-ear cress).